Reading from the N-terminus, the 49-residue chain is SPbeta prophage-derived uncharacterized protein YorN (49 aa).

The protein is SPbeta prophage-derived uncharacterized protein YorN (yorN) of Bacillus subtilis (strain 168).